Consider the following 293-residue polypeptide: GTPase Era (293 aa).

The 168-residue stretch at Lys-3–Glu-170 folds into the Era-type G domain. The G1 stretch occupies residues Gly-11 to Ser-18. Gly-11–Ser-18 lines the GTP pocket. The tract at residues Gln-37–Asn-41 is G2. The tract at residues Asp-58–Gly-61 is G3. GTP is bound by residues Asp-58–Ile-62 and Asn-120–Asp-123. The segment at Asn-120–Asp-123 is G4. Residues Ile-149 to Ala-151 are G5. In terms of domain architecture, KH type-2 spans Leu-201–Lys-278.

The protein belongs to the TRAFAC class TrmE-Era-EngA-EngB-Septin-like GTPase superfamily. Era GTPase family. In terms of assembly, monomer.

It localises to the cytoplasm. The protein resides in the cell membrane. In terms of biological role, an essential GTPase that binds both GDP and GTP, with rapid nucleotide exchange. Plays a role in 16S rRNA processing and 30S ribosomal subunit biogenesis and possibly also in cell cycle regulation and energy metabolism. This is GTPase Era from Clostridium kluyveri (strain NBRC 12016).